Consider the following 436-residue polypeptide: Transcriptional regulator STP3 (436 aa).

The disordered stretch occupies residues 204 to 277; that stretch reads EPLDDEFVPP…TKRKYTKKKQ (74 aa). Over residues 230–265 the composition is skewed to low complexity; that stretch reads ISPPASSDSSSSSSYVPQLIPSSSSSVTSNGDSPVS. Basic residues predominate over residues 268–277; the sequence is TKRKYTKKKQ. Residues 315 to 337 form a C2H2-type zinc finger; it reads FDCPSCDASFKVKGYLTRHLKKH.

Post-translationally, activated by the amino acid-induced proteolytic removal of an N-terminal inhibitory domain.

Its subcellular location is the cell membrane. It localises to the nucleus. Transcription factor that activates genes required for degradation of extracellular protein and uptake of peptides such as the secreted aspartyl protease SAP2 or the oligopeptide transporter OPT1. Required for virulence. Synthesized as latent cytoplasmic precursor, which, upon a signal initiated by the plasma membrane SPS amino acid sensor system (including CSY1 and CSH3), becomes proteolytically activated and relocates to the nucleus, where it induces the expression of SPS-sensor-regulated genes. The polypeptide is Transcriptional regulator STP3 (STP3) (Candida albicans (strain SC5314 / ATCC MYA-2876) (Yeast)).